Consider the following 131-residue polypeptide: Profilin-6 (131 aa).

Cys13 and Cys115 are disulfide-bonded. The short motif at 81 to 97 (AVIRGKKGSGGITVKKT) is the Involved in PIP2 interaction element. Residue Thr111 is modified to Phosphothreonine.

This sequence belongs to the profilin family. As to quaternary structure, occurs in many kinds of cells as a complex with monomeric actin in a 1:1 ratio. Phosphorylated by MAP kinases.

It localises to the cytoplasm. Its subcellular location is the cytoskeleton. In terms of biological role, binds to actin and affects the structure of the cytoskeleton. At high concentrations, profilin prevents the polymerization of actin, whereas it enhances it at low concentrations. The sequence is that of Profilin-6 from Zea mays (Maize).